The following is a 286-amino-acid chain: Thiamine-monophosphate kinase (286 aa).

Mg(2+) is bound by residues Asp22, Ser36, Thr37, and Asp38. Asp45 lines the substrate pocket. Mg(2+) is bound by residues Asp66 and Asp111. Residues 110-111 (GD) and Arg136 contribute to the ATP site. Asp191 is a binding site for Mg(2+). Ser193 contacts ATP. Residue Asp194 participates in Mg(2+) binding. Tyr282 contributes to the substrate binding site.

This sequence belongs to the thiamine-monophosphate kinase family.

The enzyme catalyses thiamine phosphate + ATP = thiamine diphosphate + ADP. Its pathway is cofactor biosynthesis; thiamine diphosphate biosynthesis; thiamine diphosphate from thiamine phosphate: step 1/1. Its function is as follows. Catalyzes the ATP-dependent phosphorylation of thiamine-monophosphate (TMP) to form thiamine-pyrophosphate (TPP), the active form of vitamin B1. This is Thiamine-monophosphate kinase from Methanospirillum hungatei JF-1 (strain ATCC 27890 / DSM 864 / NBRC 100397 / JF-1).